The primary structure comprises 338 residues: Taste receptor type 2 member 39 (338 aa).

Residues 1 to 30 are Extracellular-facing; the sequence is MLGRCFPPNTKEKQQLRMIKLCDPAESELS. The chain crosses the membrane as a helical span at residues 31-51; that stretch reads PFLITLTLAVLLAEYLTGIIA. The Cytoplasmic segment spans residues 52–74; that stretch reads NGFITAIHAAECVQNKSVSTSGR. The chain crosses the membrane as a helical span at residues 75–95; that stretch reads ILVFLSVSRIALQSLMMLEIT. Over 96–116 the chain is Extracellular; that stretch reads ISSTSLSFYSEDTVYYAFKIS. Residues 117–137 traverse the membrane as a helical segment; sequence FIFLNFCSLWFAAWLSFFYFV. The Cytoplasmic segment spans residues 138 to 156; sequence KIANFSYPLFLKLRWRISG. A helical transmembrane segment spans residues 157-177; the sequence is LIPWLLWLSVFISFSHSMFCI. The Extracellular portion of the chain corresponds to 178–205; sequence NICTGYCDNSFPIHSSNSTEKTYFSEIS. A glycan (N-linked (GlcNAc...) asparagine) is linked at asparagine 194. A helical membrane pass occupies residues 206 to 226; it reads VVSLAFFFNLGIVIPLIMFIL. Topologically, residues 227-262 are cytoplasmic; sequence AAILLILSLKRHTLYMXSNATGSKDPSMEAHIGAIK. Residues 263-283 traverse the membrane as a helical segment; it reads ATSYFLILYIFNAVALFIYLS. Residues 284 to 291 are Extracellular-facing; sequence NMFDINSL. A helical membrane pass occupies residues 292-312; it reads WNTLCQIIMAAYPASHSILLI. Topologically, residues 313-338 are cytoplasmic; it reads KDNPGLRRAWKQLQHRLHLYPKEWTL.

Belongs to the G-protein coupled receptor T2R family.

Its subcellular location is the membrane. Its function is as follows. Receptor that may play a role in the perception of bitterness and is gustducin-linked. May play a role in sensing the chemical composition of the gastrointestinal content. The activity of this receptor may stimulate alpha gustducin, mediate PLC-beta-2 activation and lead to the gating of TRPM5. The protein is Taste receptor type 2 member 39 (TAS2R39) of Papio hamadryas (Hamadryas baboon).